A 332-amino-acid chain; its full sequence is Fructose-1,6-bisphosphatase class 1 (332 aa).

Mg(2+) contacts are provided by Glu93, Asp113, Leu115, and Asp116. Residues 116–119, Asn209, Tyr235, and Lys272 contribute to the substrate site; that span reads DGSS. Glu278 lines the Mg(2+) pocket.

Belongs to the FBPase class 1 family. As to quaternary structure, homotetramer. The cofactor is Mg(2+).

The protein localises to the cytoplasm. It catalyses the reaction beta-D-fructose 1,6-bisphosphate + H2O = beta-D-fructose 6-phosphate + phosphate. It functions in the pathway carbohydrate biosynthesis; gluconeogenesis. The polypeptide is Fructose-1,6-bisphosphatase class 1 (Syntrophus aciditrophicus (strain SB)).